The primary structure comprises 157 residues: MSHPDLNKLLELWPHIQEYQDLALKHGINDIFQDNGGKLLQVLLITGLTVLPGREGNDAVDNAGQEYELKSINIDLTKGFSTHHHMNPVIIAKYRQVPWIFAIYRGIAIEAIYRLEPKDLEFYYDKWERKWYSDGHKDINNPKIPVKYVMEHGTKIY.

Positions 58 and 68 each coordinate Mg(2+).

In terms of assembly, homodimer. The cofactor is Mg(2+).

It catalyses the reaction Endonucleolytic cleavage of DNA to give specific double-stranded fragments with terminal 5'-phosphates.. Functionally, a P subtype restriction enzyme that recognizes the double-stranded sequence 5'-CAGCTG-3' and cleaves after G-3. In Proteus hauseri, this protein is Type II restriction enzyme PvuII (pvuIIR).